We begin with the raw amino-acid sequence, 100 residues long: uncharacterized protein (100 aa).

This is an uncharacterized protein from Caulobacter vibrioides (strain ATCC 19089 / CIP 103742 / CB 15) (Caulobacter crescentus).